Here is a 128-residue protein sequence, read N- to C-terminus: Ribosome-binding factor A (128 aa).

This sequence belongs to the RbfA family. Monomer. Binds 30S ribosomal subunits, but not 50S ribosomal subunits or 70S ribosomes.

It is found in the cytoplasm. Its function is as follows. One of several proteins that assist in the late maturation steps of the functional core of the 30S ribosomal subunit. Associates with free 30S ribosomal subunits (but not with 30S subunits that are part of 70S ribosomes or polysomes). Required for efficient processing of 16S rRNA. May interact with the 5'-terminal helix region of 16S rRNA. This chain is Ribosome-binding factor A, found in Rippkaea orientalis (strain PCC 8801 / RF-1) (Cyanothece sp. (strain PCC 8801)).